A 150-amino-acid chain; its full sequence is FAD synthase (150 aa).

Residues 11–12 (TF), 16–19 (HPGH), aspartate 96, and tyrosine 124 contribute to the ATP site.

Belongs to the archaeal FAD synthase family. In terms of assembly, homodimer. The cofactor is a divalent metal cation.

The catalysed reaction is FMN + ATP + H(+) = FAD + diphosphate. Its pathway is cofactor biosynthesis; FAD biosynthesis; FAD from FMN: step 1/1. Catalyzes the transfer of the AMP portion of ATP to flavin mononucleotide (FMN) to produce flavin adenine dinucleotide (FAD) coenzyme. In Methanococcus maripaludis (strain C7 / ATCC BAA-1331), this protein is FAD synthase.